The chain runs to 254 residues: Tubulin-specific chaperone B (254 aa).

A CAP-Gly domain is found at 182-225; the sequence is PLPLDVMGTWCGVEFPEAAGKNDGRINGVTLFGPVAPGHGSFVR. The interval 234–254 is disordered; the sequence is KDEESAEVEDVHDDVESDDEI. Acidic residues predominate over residues 237–254; the sequence is ESAEVEDVHDDVESDDEI.

This sequence belongs to the TBCB family. As to quaternary structure, binds to monomeric alpha-tubulin.

Its subcellular location is the cytoplasm. The protein resides in the cytoskeleton. Its function is as follows. Acts to sequester alpha-tubulin from interaction with beta-tubulin, raising the possibility that it plays a regulatory role in the formation of the tubulin heterodimer. The chain is Tubulin-specific chaperone B (ALF1) from Saccharomyces cerevisiae (strain ATCC 204508 / S288c) (Baker's yeast).